We begin with the raw amino-acid sequence, 267 residues long: 3-isopropylmalate dehydratase large subunit (267 aa).

[4Fe-4S] cluster-binding residues include Cys146, Cys206, and Cys209.

Belongs to the aconitase/IPM isomerase family. LeuC type 1 subfamily. As to quaternary structure, heterodimer of LeuC and LeuD. [4Fe-4S] cluster serves as cofactor.

It catalyses the reaction (2R,3S)-3-isopropylmalate = (2S)-2-isopropylmalate. Its pathway is amino-acid biosynthesis; L-leucine biosynthesis; L-leucine from 3-methyl-2-oxobutanoate: step 2/4. Catalyzes the isomerization between 2-isopropylmalate and 3-isopropylmalate, via the formation of 2-isopropylmaleate. This Cupriavidus necator (Alcaligenes eutrophus) protein is 3-isopropylmalate dehydratase large subunit (leuC).